A 517-amino-acid chain; its full sequence is Bifunctional purine biosynthesis protein PurH (517 aa).

Residues 1–146 (MKRLALLSTS…KNFAHLTVLC (146 aa)) enclose the MGS-like domain.

The protein belongs to the PurH family.

The enzyme catalyses (6R)-10-formyltetrahydrofolate + 5-amino-1-(5-phospho-beta-D-ribosyl)imidazole-4-carboxamide = 5-formamido-1-(5-phospho-D-ribosyl)imidazole-4-carboxamide + (6S)-5,6,7,8-tetrahydrofolate. It catalyses the reaction IMP + H2O = 5-formamido-1-(5-phospho-D-ribosyl)imidazole-4-carboxamide. Its pathway is purine metabolism; IMP biosynthesis via de novo pathway; 5-formamido-1-(5-phospho-D-ribosyl)imidazole-4-carboxamide from 5-amino-1-(5-phospho-D-ribosyl)imidazole-4-carboxamide (10-formyl THF route): step 1/1. It participates in purine metabolism; IMP biosynthesis via de novo pathway; IMP from 5-formamido-1-(5-phospho-D-ribosyl)imidazole-4-carboxamide: step 1/1. This chain is Bifunctional purine biosynthesis protein PurH, found in Trichodesmium erythraeum (strain IMS101).